A 179-amino-acid chain; its full sequence is ATP synthase subunit b (179 aa).

Residues 27–47 (TAITFLVMLVVLGKFAWGPIV) form a helical membrane-spanning segment.

The protein belongs to the ATPase B chain family. As to quaternary structure, F-type ATPases have 2 components, F(1) - the catalytic core - and F(0) - the membrane proton channel. F(1) has five subunits: alpha(3), beta(3), gamma(1), delta(1), epsilon(1). F(0) has three main subunits: a(1), b(2) and c(10-14). The alpha and beta chains form an alternating ring which encloses part of the gamma chain. F(1) is attached to F(0) by a central stalk formed by the gamma and epsilon chains, while a peripheral stalk is formed by the delta and b chains.

It is found in the cell inner membrane. In terms of biological role, f(1)F(0) ATP synthase produces ATP from ADP in the presence of a proton or sodium gradient. F-type ATPases consist of two structural domains, F(1) containing the extramembraneous catalytic core and F(0) containing the membrane proton channel, linked together by a central stalk and a peripheral stalk. During catalysis, ATP synthesis in the catalytic domain of F(1) is coupled via a rotary mechanism of the central stalk subunits to proton translocation. Functionally, component of the F(0) channel, it forms part of the peripheral stalk, linking F(1) to F(0). The sequence is that of ATP synthase subunit b from Anaeromyxobacter sp. (strain K).